The primary structure comprises 406 residues: Argininosuccinate synthase (406 aa).

Residue 8–16 (AYSGGLDTS) coordinates ATP. Tyrosine 86 contributes to the L-citrulline binding site. Glycine 116 is a binding site for ATP. Positions 118, 122, and 123 each coordinate L-aspartate. Asparagine 122 serves as a coordination point for L-citrulline. The L-citrulline site is built by arginine 126, serine 174, glutamate 259, and tyrosine 271.

This sequence belongs to the argininosuccinate synthase family. Type 1 subfamily. In terms of assembly, homotetramer.

It localises to the cytoplasm. It catalyses the reaction L-citrulline + L-aspartate + ATP = 2-(N(omega)-L-arginino)succinate + AMP + diphosphate + H(+). Its pathway is amino-acid biosynthesis; L-arginine biosynthesis; L-arginine from L-ornithine and carbamoyl phosphate: step 2/3. This Lacticaseibacillus paracasei (strain ATCC 334 / BCRC 17002 / CCUG 31169 / CIP 107868 / KCTC 3260 / NRRL B-441) (Lactobacillus paracasei) protein is Argininosuccinate synthase.